Reading from the N-terminus, the 571-residue chain is Putative diflavin flavoprotein A 1 (571 aa).

The segment at 43-236 (ENGTTYNSFL…PPVQLVATGH (194 aa)) is zinc metallo-hydrolase. His92, Glu94, Asp96, His159, Asp178, and His236 together coordinate Fe cation. Positions 265–426 (VAIFYAANYG…DLDKALGRLS (162 aa)) constitute a Flavodoxin-like domain. The flavodoxin-reductase-like stretch occupies residues 427–571 (GGLYIITAQK…VHHRKVGNHY (145 aa)).

It in the N-terminal section; belongs to the zinc metallo-hydrolase group 3 family. This sequence in the C-terminal section; belongs to the flavodoxin reductase family. It depends on Fe cation as a cofactor.

In terms of biological role, mediates electron transfer from NADH to oxygen, reducing it to water. This modular protein has 3 redox cofactors, in other organisms the same activity requires 2 or 3 proteins. The sequence is that of Putative diflavin flavoprotein A 1 (dfa1) from Thermosynechococcus vestitus (strain NIES-2133 / IAM M-273 / BP-1).